We begin with the raw amino-acid sequence, 60 residues long: Large ribosomal subunit protein bL33 (60 aa).

Belongs to the bacterial ribosomal protein bL33 family.

The protein is Large ribosomal subunit protein bL33 of Chlorobaculum tepidum (strain ATCC 49652 / DSM 12025 / NBRC 103806 / TLS) (Chlorobium tepidum).